Here is a 389-residue protein sequence, read N- to C-terminus: Chalcone synthase 2 (389 aa).

Cysteine 164 is an active-site residue.

Belongs to the thiolase-like superfamily. Chalcone/stilbene synthases family.

It catalyses the reaction (E)-4-coumaroyl-CoA + 3 malonyl-CoA + 3 H(+) = 2',4,4',6'-tetrahydroxychalcone + 3 CO2 + 4 CoA. It functions in the pathway secondary metabolite biosynthesis; flavonoid biosynthesis. In terms of biological role, the primary product of this enzyme is 4,2',4',6'-tetrahydroxychalcone (also termed naringenin-chalcone or chalcone) which can under specific conditions spontaneously isomerize into naringenin. In Pisum sativum (Garden pea), this protein is Chalcone synthase 2 (CHS2).